The sequence spans 2138 residues: Protein virilizer homolog (2138 aa).

Disordered stretches follow at residues 1503 to 1574 (RLPQ…SMHV), 1638 to 1664 (NPTPARDTEKVAGKPKQFKADPDDDLQ), 1855 to 1881 (PVIPHSSDSLSNQSSPFISHGTQSSGG), 2013 to 2035 (PMQPPQHVRPPIQISQPSEQGVS), and 2058 to 2094 (YYHPPQQQEISQVQQQQQHHAVQGQQGAGTSQQQESG). The span at 1528 to 1541 (ENSSVDIPTQNSIQ) shows a compositional bias: polar residues. 2 stretches are compositionally biased toward polar residues: residues 1862–1881 (DSLSNQSSPFISHGTQSSGG) and 2025–2035 (QISQPSEQGVS).

Belongs to the vir family. In terms of assembly, interacts with MTB, FIP37 and HAKAI. Associates with MTA, MTB, FIP37 and HAKAI to form the m6A writer complex which is essential for adenosine methylation at specific mRNA sequences.

Its subcellular location is the nucleus speckle. The protein resides in the nucleus. It localises to the nucleoplasm. Its function is as follows. Subunit of the N6-methyltransferase complex, a multiprotein complex that mediates N6-methyladenosine (m6A) methylation at the 5'-[AG]GAC-3' consensus sites of some mRNAs. Associates with MTA, MTB, FIP37 and HAKAI to form the m6A writer complex which is essential for adenosine methylation at specific mRNA sequences. N6-methyladenosine (m6A) plays a role in mRNA stability, processing, translation efficiency and editing. This is Protein virilizer homolog from Arabidopsis thaliana (Mouse-ear cress).